The following is a 1845-amino-acid chain: Helicase swr-1 (1845 aa).

Residues 1–13 show a composition bias toward polar residues; that stretch reads MTTMMTDSGTASD. The tract at residues 1 to 329 is disordered; that stretch reads MTTMMTDSGT…GASRATPRIK (329 aa). The span at 24–38 shows a compositional bias: low complexity; it reads NDTTTTTTTTTTPGD. The span at 63–84 shows a compositional bias: polar residues; the sequence is SKSYSSTHHVPAIDNTSTTNAN. The segment covering 98–108 has biased composition (low complexity); it reads SPLSSISSPLS. A compositionally biased stretch (basic and acidic residues) spans 168 to 180; it reads PKPESPPWKKFEA. A compositionally biased stretch (polar residues) spans 216 to 243; sequence AIQTSPVSNKSSASTSRKPAPASSSNSK. Composition is skewed to pro residues over residues 248 to 258 and 283 to 292; these read KMPPPPPPPKA and PRRPATPPKP. The HSA domain occupies 418–493; that stretch reads PEAEEEPPRQ…EMEASKAKWR (76 aa). Disordered regions lie at residues 539-713 and 749-935; these read QKLQ…LFFG and ELQV…TVKT. A compositionally biased stretch (acidic residues) spans 549–565; sequence DGDEITDEDEDEDDEDL. The segment covering 574–585 has biased composition (basic and acidic residues); that stretch reads GDEKESDEHSDQ. Acidic residues-rich tracts occupy residues 586 to 608 and 663 to 704; these read GSDEMSDENDEDEDEDNMSSSED and NDDD…DDEP. Composition is skewed to polar residues over residues 762 to 777 and 815 to 834; these read TNGTHTNEQLASSQTE and TNDSSLKYPNEIVQSENQTL. Residues 888–897 show a composition bias toward low complexity; the sequence is SQSQTQSPKT. Over residues 898–909 the composition is skewed to basic and acidic residues; it reads TDTKPTDVDTPH. A compositionally biased stretch (polar residues) spans 922–933; it reads RQSSPQPTTPTV. The region spanning 957-1122 is the Helicase ATP-binding domain; the sequence is AGLYANNTNG…WSLLYFLAPP (166 aa). An ATP-binding site is contributed by 970–977; the sequence is DEMGLGKT. Positions 1073-1076 match the DEAH box motif; that stretch reads DEAH. The 151-residue stretch at 1510–1660 folds into the Helicase C-terminal domain; sequence ALDKLLRKLQ…DVVIQEGEFT (151 aa). 3 disordered regions span residues 1702 to 1724, 1751 to 1783, and 1816 to 1845; these read TTGAGGYDGTADGGGGASQPPVR, QDEADFGEAGSTRPGTPGDGLADLDGQLLGGEE, and LEGTPLELPRDRKKGRDRNRNRKGKDSRKR. The segment covering 1704–1718 has biased composition (gly residues); the sequence is GAGGYDGTADGGGGA. Residues 1769–1781 show a composition bias toward low complexity; it reads DGLADLDGQLLGG. Over residues 1826–1845 the composition is skewed to basic residues; the sequence is DRKKGRDRNRNRKGKDSRKR.

Belongs to the SNF2/RAD54 helicase family. SWR1 subfamily. In terms of assembly, component of the SWR1 chromatin-remodeling complex.

The protein localises to the nucleus. It catalyses the reaction ATP + H2O = ADP + phosphate + H(+). In terms of biological role, catalytic component of the SWR1 complex which mediates the ATP-dependent exchange of histone H2A for the H2A variant H2A.Z leading to transcriptional regulation of selected genes by chromatin remodeling. The polypeptide is Helicase swr-1 (crf1-1) (Neurospora crassa (strain ATCC 24698 / 74-OR23-1A / CBS 708.71 / DSM 1257 / FGSC 987)).